A 196-amino-acid chain; its full sequence is Dephospho-CoA kinase (196 aa).

Positions 3 to 196 (RIGLTGNIGC…KVYEELTRDP (194 aa)) constitute a DPCK domain. Residue 11–16 (GCGKST) participates in ATP binding.

It belongs to the CoaE family.

The protein resides in the cytoplasm. The enzyme catalyses 3'-dephospho-CoA + ATP = ADP + CoA + H(+). The protein operates within cofactor biosynthesis; coenzyme A biosynthesis; CoA from (R)-pantothenate: step 5/5. Its function is as follows. Catalyzes the phosphorylation of the 3'-hydroxyl group of dephosphocoenzyme A to form coenzyme A. The chain is Dephospho-CoA kinase from Aquifex aeolicus (strain VF5).